A 296-amino-acid polypeptide reads, in one-letter code: Dof zinc finger protein DOF3.7 (296 aa).

A disordered region spans residues N41–R69. Over residues N45–T62 the composition is skewed to low complexity. A Dof-type zinc finger spans residues V74–R128. C76, C79, C101, and C104 together coordinate Zn(2+). Residues R115–P146 are disordered. The segment covering S129–N138 has biased composition (polar residues).

In terms of tissue distribution, expressed in the phloem of the mother plant, including in roots, stem, leaves and flowers, but not present in the seed and embryo. In maturing siliques, found all through the funiculus connecting the placenta to the ovule, but not in the ovule.

It is found in the nucleus. Functionally, transcription factor specifically involved in the maternal control of seed germination. Regulates transcription by binding to a 5'-AA[AG]G-3' consensus core sequence. May ensure the inactivity of a component that would be activated to trigger germination as a consequence of red light perception. The chain is Dof zinc finger protein DOF3.7 (DOF3.7) from Arabidopsis thaliana (Mouse-ear cress).